Consider the following 124-residue polypeptide: Fluoride-specific ion channel FluC (124 aa).

The next 4 helical transmembrane spans lie at 5–25, 38–58, 69–89, and 99–119; these read ILAVSIAGIAGTLLRFATGTW, TLAVNIVGCLIIGVLYGLFLL, GLIVGFVGGLTTFSSFSLDTL, and LALGYAGISVFGGLLATWAGL. Na(+) is bound by residues Gly-76 and Thr-79.

This sequence belongs to the fluoride channel Fluc/FEX (TC 1.A.43) family.

Its subcellular location is the cell inner membrane. It carries out the reaction fluoride(in) = fluoride(out). Na(+) is not transported, but it plays an essential structural role and its presence is essential for fluoride channel function. In terms of biological role, fluoride-specific ion channel. Important for reducing fluoride concentration in the cell, thus reducing its toxicity. This chain is Fluoride-specific ion channel FluC, found in Pseudomonas syringae pv. syringae (strain B728a).